Here is a 171-residue protein sequence, read N- to C-terminus: Profilin (171 aa).

Residues 5 to 10 are pro-rich sequence-binding; that stretch reads YSWDSY. Positions 48 to 54 match the Plasmodium-specific profilin mini-domain motif; sequence FDKWSLF. 2 actin-binding regions span residues 100–112 and 152–156; these read KYQFINIERDLEF and RGNSK.

Belongs to the profilin family. Binds actin.

Its subcellular location is the cytoplasm. The protein localises to the cytoskeleton. Its function is as follows. Essential for the invasive blood stages of the parasite. Binds to proline rich sequences in various regulatory formin-like proteins and also to membrane phospholipids. Binds to actin and affects the structure of the cytoskeleton. Weakly sequesters actin monomers. The polypeptide is Profilin (Plasmodium falciparum (isolate 3D7)).